A 315-amino-acid polypeptide reads, in one-letter code: 3-chlorobenzoate-3,4-dioxygenase reductase subunit (315 aa).

1 to 103 (MVAIDQHDTY…GATTRISAPR (103 aa)) contributes to the FMN binding site. The region spanning 7-109 (HDTYSVRVIS…SAPRNAFALD (103 aa)) is the FAD-binding FR-type domain. Residues 228–315 (NEFTVNLARS…ALSPELTLDL (88 aa)) enclose the 2Fe-2S ferredoxin-type domain. Cysteine 264, cysteine 269, cysteine 272, and cysteine 302 together coordinate [2Fe-2S] cluster.

It belongs to the PDR/VanB family. In terms of assembly, this dioxygenase system consists of two proteins: phthalate oxygenase and phthalate oxygenase reductase. It depends on FMN as a cofactor.

This Comamonas testosteroni (Pseudomonas testosteroni) protein is 3-chlorobenzoate-3,4-dioxygenase reductase subunit (cbaB).